Reading from the N-terminus, the 89-residue chain is Small ribosomal subunit protein uS17 (89 aa).

Belongs to the universal ribosomal protein uS17 family. Part of the 30S ribosomal subunit.

In terms of biological role, one of the primary rRNA binding proteins, it binds specifically to the 5'-end of 16S ribosomal RNA. This chain is Small ribosomal subunit protein uS17, found in Ralstonia pickettii (strain 12J).